A 351-amino-acid polypeptide reads, in one-letter code: Methionine import ATP-binding protein MetN (351 aa).

Residues 2–241 (IVTEALTKAF…PQHAVTRAFV (240 aa)) form the ABC transporter domain. 38–45 (GRSGAGKS) is a binding site for ATP.

This sequence belongs to the ABC transporter superfamily. Methionine importer (TC 3.A.1.24) family. In terms of assembly, the complex is composed of two ATP-binding proteins (MetN), two transmembrane proteins (MetI) and a solute-binding protein (MetQ).

Its subcellular location is the cell inner membrane. It catalyses the reaction L-methionine(out) + ATP + H2O = L-methionine(in) + ADP + phosphate + H(+). It carries out the reaction D-methionine(out) + ATP + H2O = D-methionine(in) + ADP + phosphate + H(+). Part of the ABC transporter complex MetNIQ involved in methionine import. Responsible for energy coupling to the transport system. This is Methionine import ATP-binding protein MetN from Rhodospirillum rubrum (strain ATCC 11170 / ATH 1.1.1 / DSM 467 / LMG 4362 / NCIMB 8255 / S1).